Here is a 91-residue protein sequence, read N- to C-terminus: Conotoxin VnMKLT1-021 (91 aa).

An N-terminal signal peptide occupies residues 1–22 (MKLTCVMIVAVLFLTAWTFVTA). Positions 23 to 57 (DDPRDGPDTAVGWRKLFSEARDEMKNREASKLNER) are excised as a propeptide. 3 disulfide bridges follow: Cys59–Cys78, Cys66–Cys82, and Cys77–Cys86.

The protein belongs to the conotoxin O1 superfamily. In terms of tissue distribution, expressed by the venom duct.

The protein resides in the secreted. The protein is Conotoxin VnMKLT1-021 of Conus ventricosus (Mediterranean cone).